Here is a 500-residue protein sequence, read N- to C-terminus: Amino-acid acetyltransferase, mitochondrial (500 aa).

The N-terminal 19 residues, 1-19, are a transit peptide targeting the mitochondrion; sequence MQKPSLSQDLIWILKSVQS. Residues 336–496 form the N-acetyltransferase domain; it reads FLGPKCLTDG…YMSVIDKIQP (161 aa).

This sequence belongs to the acetyltransferase family.

Its subcellular location is the mitochondrion. The catalysed reaction is L-glutamate + acetyl-CoA = N-acetyl-L-glutamate + CoA + H(+). It participates in amino-acid biosynthesis; L-arginine biosynthesis; N(2)-acetyl-L-ornithine from L-glutamate: step 1/4. Functionally, N-acetylglutamate synthase involved in arginine biosynthesis. The protein is Amino-acid acetyltransferase, mitochondrial (arg6) of Schizosaccharomyces pombe (strain 972 / ATCC 24843) (Fission yeast).